A 269-amino-acid polypeptide reads, in one-letter code: Probable ribosomal RNA small subunit methyltransferase A (269 aa).

Residues His-23, Leu-25, Gly-50, Glu-71, Asp-95, and Asn-110 each contribute to the S-adenosyl-L-methionine site.

It belongs to the class I-like SAM-binding methyltransferase superfamily. rRNA adenine N(6)-methyltransferase family. RsmA subfamily.

Its subcellular location is the cytoplasm. Functionally, specifically dimethylates two adjacent adenosines in the loop of a conserved hairpin near the 3'-end of 16S rRNA in the 30S particle. May play a critical role in biogenesis of 30S subunits. This Pyrococcus abyssi (strain GE5 / Orsay) protein is Probable ribosomal RNA small subunit methyltransferase A.